An 898-amino-acid polypeptide reads, in one-letter code: Chloride channel protein 2 (898 aa).

Topologically, residues 1 to 90 (MAAPAAAAVE…RCHKFLVSRV (90 aa)) are cytoplasmic. The essential for channel gating by both voltage and cell volume stretch occupies residues 19 to 37 (QYEQTLMYGRYTQDLGAFA). Phosphothreonine is present on T23. The interval 39–52 (EEAARIRLGGPEPW) is modulates channel gating by both voltage and cell volume. A run of 2 helical transmembrane segments spans residues 91-124 (GEDWIFLVLLGLLMALVSWAMDYAIAACLQAQQW) and 133-158 (LLLQYLAWVTYPVVLITFSAGFTQIL). The Selectivity filter part_1 motif lies at 164-168 (GSGIP). Positions 167–174 (IPEMKTIL) form an intramembrane region, helical. The next 2 helical transmembrane spans lie at 183–201 (LTLKTFVAKVIGLTCALGS) and 208–226 (EGPFVHIASMCAALLSKFL). Positions 206 to 210 (GKEGP) match the Selectivity filter part_2 motif. 2 consecutive intramembrane regions (helical) follow at residues 242-254 (MLAAACAVGVGCC) and 258-266 (PIGGVLFSI). 5 helical membrane-spanning segments follow: residues 278 to 298 (YWRGFFAATFSAFIFRVLAVW), 324 to 352 (LPAFAVIGIASGFGGALFVYLNRKIVQVM), 361 to 380 (FLMRKRLLFPALVTLLISTL), 432 to 452 (ANVFLTLVIFILMKFWMSALA), and 460 to 483 (GAFMPVFVIGAAFGRLVGESMAAW). The Selectivity filter part_3 motif lies at 460–464 (GAFMP). Residues 500 to 514 (GGYAVVGAAALAGAV) constitute an intramembrane region (helical). Residues 515-516 (TH) constitute an intramembrane region (note=Loop between two helices). The helical intramembrane region spans 517–528 (TVSTAVIVFELT). Positions 529 to 533 (GQIAH) form an intramembrane region, note=Loop between two helices. A helical transmembrane segment spans residues 534–551 (ILPVMIAVILANAVAQSL). At 552–898 (QPSLYDSIIR…SPSDSDDKCQ (347 aa)) the chain is on the cytoplasmic side. The CBS 1 domain occupies 587-645 (MVRDVPHVALSCTFRDLRLALHRTKGRTLALVESPESMILLGSIERTQVVALLAAQLSP). Residues 647 to 658 (RRRQSKQKRRVA) are compositionally biased toward basic residues. The interval 647–675 (RRRQSKQKRRVAHTSPPSCQESPPSPETS) is disordered. Residue S710 is modified to Phosphoserine. The interval 726–766 (FCGSPPPEAASESEKSESSEKRKSKRVRISLASDSDLEGEM) is disordered. The span at 737 to 746 (ESEKSESSEK) shows a compositional bias: basic and acidic residues. S758 carries the post-translational modification Phosphoserine. Residues 790–850 (IDPAPFQLVE…GSVTAQGVKV (61 aa)) form the CBS 2 domain. The Basolateral membrane sorting signature appears at 812 to 813 (LL). Residues 856 to 898 (SFRDSATSSSDTETTEVHALWGPRSRHGLPREGSPSDSDDKCQ) are disordered.

The protein belongs to the chloride channel (TC 2.A.49) family. ClC-2/CLCN2 subfamily. As to quaternary structure, homodimer. Interacts with auxiliary subunit HEPACAM. In terms of processing, phosphorylated. Activated by dephosphorylation. As to expression, ubiquitously expressed.

The protein localises to the cell membrane. Its subcellular location is the basolateral cell membrane. The protein resides in the cell projection. It is found in the dendritic spine membrane. It localises to the axon. The enzyme catalyses chloride(in) = chloride(out). The catalysed reaction is thiocyanate(in) = thiocyanate(out). It carries out the reaction bromide(in) = bromide(out). It catalyses the reaction nitrate(in) = nitrate(out). The enzyme catalyses iodide(out) = iodide(in). With respect to regulation, common gate kinetics are down-regulated by intracellular ATP. Inhibited by AK-42, a derivative of meclofenamate. Inhibited by Cd(2+). Inhibited by Zn(2+) and PKC activation. Inhibited at acidic pH. CCLN2:HEPACAM channel conductance is up-regulated upon hypo-osmolarity. Functionally, voltage-gated and osmosensitive chloride channel. Forms a homodimeric channel where each subunit has its own ion conduction pathway. Conducts double-barreled currents controlled by two types of gates, two fast glutamate gates that control each subunit independently and a slow common gate that opens and shuts off both subunits simultaneously. Displays inward rectification currents activated upon membrane hyperpolarization and extracellular hypotonicity. Contributes to chloride conductance involved in neuron excitability. In hippocampal neurons, generates a significant part of resting membrane conductance and provides an additional chloride efflux pathway to prevent chloride accumulation in dendrites upon GABA receptor activation. In glia, associates with the auxiliary subunit HEPACAM/GlialCAM at astrocytic processes and myelinated fiber tracts where it may regulate transcellular chloride flux buffering extracellular chloride and potassium concentrations. Regulates aldosterone production in adrenal glands. The opening of CLCN2 channels at hyperpolarized membrane potentials in the glomerulosa causes cell membrane depolarization, activation of voltage-gated calcium channels and increased expression of aldosterone synthase, the rate-limiting enzyme for aldosterone biosynthesis. Contributes to chloride conductance in retinal pigment epithelium involved in phagocytosis of shed photoreceptor outer segments and photoreceptor renewal. Conducts chloride currents at the basolateral membrane of epithelial cells with a role in chloride reabsorption rather than secretion. Permeable to small monovalent anions with chloride &gt; thiocyanate &gt; bromide &gt; nitrate &gt; iodide ion selectivity. This chain is Chloride channel protein 2 (CLCN2), found in Oryctolagus cuniculus (Rabbit).